A 424-amino-acid polypeptide reads, in one-letter code: Cytoplasmic tRNA 2-thiolation protein 2 (424 aa).

Positions 357–385 (PAAPETEEEEELSKKAHMEKSQEKTGDAD) are disordered. Residues 368 to 385 (LSKKAHMEKSQEKTGDAD) show a composition bias toward basic and acidic residues.

This sequence belongs to the CTU2/NCS2 family.

It is found in the cytoplasm. It participates in tRNA modification; 5-methoxycarbonylmethyl-2-thiouridine-tRNA biosynthesis. Its function is as follows. Plays a central role in 2-thiolation of mcm(5)S(2)U at tRNA wobble positions of tRNA(Lys), tRNA(Glu) and tRNA(Gln). May act by forming a heterodimer with NCS6 that ligates sulfur from thiocarboxylated URM1 onto the uridine of tRNAs at wobble position. Prior mcm(5) tRNA modification by the elongator complex is required for 2-thiolation. May also be involved in protein urmylation. This is Cytoplasmic tRNA 2-thiolation protein 2 from Yarrowia lipolytica (strain CLIB 122 / E 150) (Yeast).